A 132-amino-acid polypeptide reads, in one-letter code: Interleukin-13 (132 aa).

An N-terminal signal peptide occupies residues Met1–Thr18. N-linked (GlcNAc...) asparagine glycosylation is found at Asn38, Asn49, Asn57, and Asn75. 2 disulfides stabilise this stretch: Cys48/Cys76 and Cys64/Cys90.

The protein belongs to the IL-4/IL-13 family. In terms of assembly, interacts with IL13RA2.

The protein resides in the secreted. In terms of biological role, cytokine that plays important roles in allergic inflammation and immune response to parasite infection. Synergizes with IL2 in regulating interferon-gamma synthesis. Stimulates B-cell proliferation, and activation of eosinophils, basophils, and mast cells. Plays an important role in controlling IL33 activity by modulating the production of transmembrane and soluble forms of interleukin-1 receptor-like 1/IL1RL1. Displays the capacity to antagonize Th1-driven proinflammatory immune response and downregulates synthesis of many proinflammatory cytokines including IL1, IL6, IL10, IL12 and TNF-alpha through a mechanism that partially involves suppression of NF-kappa-B. Also functions on nonhematopoietic cells, including endothelial cells where it induces vascular cell adhesion protein 1/VCAM1, which is important in the recruitment of eosinophils. Exerts its biological effects through its receptors which comprises the IL4R chain and the IL13RA1 chain, to activate JAK1 and TYK2, leading to the activation of STAT6. Aside from IL13RA1, another receptor IL13RA2 acts as a high affinity decoy for IL13 and mediates internalization and depletion of extracellular IL13. This chain is Interleukin-13 (IL13), found in Bos taurus (Bovine).